Here is a 246-residue protein sequence, read N- to C-terminus: Biosynthetic peptidoglycan transglycosylase (246 aa).

Residues 27 to 47 traverse the membrane as a helical segment; sequence VVFCFFFAVFALLLIFRFVPI.

This sequence belongs to the glycosyltransferase 51 family.

It localises to the cell inner membrane. The catalysed reaction is [GlcNAc-(1-&gt;4)-Mur2Ac(oyl-L-Ala-gamma-D-Glu-L-Lys-D-Ala-D-Ala)](n)-di-trans,octa-cis-undecaprenyl diphosphate + beta-D-GlcNAc-(1-&gt;4)-Mur2Ac(oyl-L-Ala-gamma-D-Glu-L-Lys-D-Ala-D-Ala)-di-trans,octa-cis-undecaprenyl diphosphate = [GlcNAc-(1-&gt;4)-Mur2Ac(oyl-L-Ala-gamma-D-Glu-L-Lys-D-Ala-D-Ala)](n+1)-di-trans,octa-cis-undecaprenyl diphosphate + di-trans,octa-cis-undecaprenyl diphosphate + H(+). The protein operates within cell wall biogenesis; peptidoglycan biosynthesis. Functionally, peptidoglycan polymerase that catalyzes glycan chain elongation from lipid-linked precursors. The chain is Biosynthetic peptidoglycan transglycosylase from Haemophilus influenzae (strain ATCC 51907 / DSM 11121 / KW20 / Rd).